The sequence spans 319 residues: Serine acetyltransferase, plasmid (319 aa).

It belongs to the transferase hexapeptide repeat family.

Its subcellular location is the cytoplasm. It carries out the reaction L-serine + acetyl-CoA = O-acetyl-L-serine + CoA. Its pathway is amino-acid biosynthesis; L-cysteine biosynthesis; L-cysteine from L-serine: step 1/2. This Synechococcus elongatus (strain ATCC 33912 / PCC 7942 / FACHB-805) (Anacystis nidulans R2) protein is Serine acetyltransferase, plasmid (srpH).